The primary structure comprises 248 residues: uncharacterized protein (248 aa).

The stretch at 33-57 (EWQLSEGQKRCEEINRQNRQLRVEK) forms a coiled coil.

This is an uncharacterized protein from Escherichia coli (strain K12).